Here is a 184-residue protein sequence, read N- to C-terminus: Alpha-tubulin N-acetyltransferase (184 aa).

One can recognise an N-acetyltransferase domain in the interval 1-170; it reads METFNHIDIK…NHFVIFSNYF (170 aa). Acetyl-CoA-binding positions include 104–117 and 140–149; these read FYIL…GLGI and SYKLQNFLKK.

Belongs to the acetyltransferase ATAT1 family.

It carries out the reaction L-lysyl-[alpha-tubulin] + acetyl-CoA = N(6)-acetyl-L-lysyl-[alpha-tubulin] + CoA + H(+). In terms of biological role, specifically acetylates 'Lys-40' in alpha-tubulin on the lumenal side of microtubules. Promotes microtubule destabilization and accelerates microtubule dynamics; this activity may be independent of acetylation activity. Acetylates alpha-tubulin with a slow enzymatic rate, due to a catalytic site that is not optimized for acetyl transfer. Enters the microtubule through each end and diffuses quickly throughout the lumen of microtubules. Acetylates only long/old microtubules because of its slow acetylation rate since it does not have time to act on dynamically unstable microtubules before the enzyme is released. This Plasmodium falciparum (isolate 3D7) protein is Alpha-tubulin N-acetyltransferase.